The following is a 341-amino-acid chain: Glucokinase (341 aa).

18 to 23 (GDIGGT) contributes to the ATP binding site.

The protein belongs to the bacterial glucokinase family.

Its subcellular location is the cytoplasm. It carries out the reaction D-glucose + ATP = D-glucose 6-phosphate + ADP + H(+). This is Glucokinase from Rhizobium johnstonii (strain DSM 114642 / LMG 32736 / 3841) (Rhizobium leguminosarum bv. viciae).